Here is a 291-residue protein sequence, read N- to C-terminus: N-acetylmannosamine kinase (291 aa).

Residues alanine 5 to lysine 12 and glycine 132 to cysteine 139 each bind ATP. Residues histidine 156, cysteine 166, cysteine 168, and cysteine 173 each coordinate Zn(2+).

This sequence belongs to the ROK (NagC/XylR) family. NanK subfamily. Homodimer.

The catalysed reaction is an N-acyl-D-mannosamine + ATP = an N-acyl-D-mannosamine 6-phosphate + ADP + H(+). It functions in the pathway amino-sugar metabolism; N-acetylneuraminate degradation; D-fructose 6-phosphate from N-acetylneuraminate: step 2/5. In terms of biological role, catalyzes the phosphorylation of N-acetylmannosamine (ManNAc) to ManNAc-6-P. The protein is N-acetylmannosamine kinase of Salmonella agona (strain SL483).